Here is a 599-residue protein sequence, read N- to C-terminus: Cytadherence high molecular weight protein 3 (599 aa).

Over residues 220–236 the composition is skewed to polar residues; it reads VQVDSGSQNHSFNNSPS. Residues 220–241 are disordered; that stretch reads VQVDSGSQNHSFNNSPSLKPPL.

It is found in the cell projection. Its subcellular location is the attachment organelle membrane. Component of the cytoskeleton-like structure which stabilizes the shape of the wall-less mycoplasma. This cytoskeleton-like network of accessory proteins containing HMW proteins 1 to 5 allows the proper anchoring of cytadhesin proteins in the mycoplasmal membrane at the attachment organelle. Essential for successful surface parasitism. The chain is Cytadherence high molecular weight protein 3 (hmw3) from Mycoplasma genitalium (strain ATCC 33530 / DSM 19775 / NCTC 10195 / G37) (Mycoplasmoides genitalium).